A 461-amino-acid polypeptide reads, in one-letter code: Histone acetyltransferase KAT5 (461 aa).

Positions 8-65 (IEGCRLPVLRRNQDNEDEWPLAEILSVKDISGRKLFYVHYIDFNKRLDEWVTHERLDL) constitute a Tudor-knot domain. K52 carries the N6-acetyllysine modification. Residues 70–168 (FPKKEAKTPT…RMTGSLVSDR (99 aa)) are disordered. Residues S86 and S90 each carry the phosphoserine modification. Residues 90 to 100 (SPEREVKRKVE) are compositionally biased toward basic and acidic residues. N6-acetyllysine; by autocatalysis is present on residues K96, K98, K135, and K137. At S147 the chain carries Phosphoserine. Positions 175–452 (TRMKNIECIE…IDSKCLHFTP (278 aa)) constitute an MYST-type HAT domain. Residues 208 to 233 (LYLCEFCLKYGRSLKCLQRHLTKCDL) form a C2HC MYST-type zinc finger. An N6-acetyllysine; by autocatalysis modification is found at K275. Residues 316-461 (ACILTLPPYQ…PKDWSKRGKW (146 aa)) form an interaction with ATF2 region. Acetyl-CoA is bound by residues 318-320 (ILT) and 325-331 (QRRGYGK). E351 functions as the Proton donor/acceptor in the catalytic mechanism. Acetyl-CoA contacts are provided by S355 and S364. K378 is covalently cross-linked (Glycyl lysine isopeptide (Lys-Gly) (interchain with G-Cter in SUMO1); alternate). A Glycyl lysine isopeptide (Lys-Gly) (interchain with G-Cter in SUMO2); alternate cross-link involves residue K378. K399 participates in a covalent cross-link: Glycyl lysine isopeptide (Lys-Gly) (interchain with G-Cter in SUMO1).

It belongs to the MYST (SAS/MOZ) family. As to quaternary structure, component of the NuA4 histone acetyltransferase complex which contains the catalytic subunit KAT5/TIP60 and the subunits EP400, TRRAP/PAF400, BRD8/SMAP, EPC1, DMAP1/DNMAP1, RUVBL1/TIP49, RUVBL2, ING3, actin, ACTL6A/BAF53A, MORF4L1/MRG15, MORF4L2/MRGX, MRGBP, YEATS4/GAS41, VPS72/YL1 and MEAF6. KAT5/TIP60, EPC1, and ING3 together constitute a minimal HAT complex termed Piccolo NuA4. The NuA4 complex interacts with MYC. Interacts with ATM. Interacts with JADE1. Interacts with PLA2G4A/CPLA2, EDNRA and HDAC7. Interacts with the cytoplasmic tail of APP and APBB1/FE65. Interacts with TRIM24 and TRIM68. Forms a complex with SENP6 and UBE2I in response to UV irradiation. Identified in a complex with HINT1. Interacts with ATF2 and CUL3. Interacts with NR1D2 (via N-terminus). Component of a SWR1-like complex. Interacts with FOXP3. Interacts with ZBTB49. Interacts with SRF. Interacts with ATF3; promoting autoacetylation and deubiquitination by USP7. Interacts with EP300/p300; interaction promotes KAT5 autoacetylation. Interacts with PRKDC; interaction is impaired following KAT5 sumoylation. Interacts with GPR50. In terms of processing, phosphorylated on Ser-86 and Ser-90; enhanced during G2/M phase. The phosphorylated form has a higher activity. Phosphorylation at Ser-90 by CDK1 or CDK9 is a prerequisite for phosphorylation at Ser-86 by GSK3. Phosphorylation at Ser-86 by GSK3 (GSK3A or GSK3B) activates acetyltransferase and acyltransferase activities. Phosphorylation at Ser-90 by CDK9 promotes KAT5 recruitment to chromatin. Phosphorylation by VRK1 following DNA damage promotes KAT5 association with chromatin and histone acetyltransferase activity. Post-translationally, autoacetylated. Autoacetylation is required for histone acetyltransferase activity. Autoacetylation at Lys-275 is facilitated by interaction with EP300/p300: it prevents ubiquitination and subsequent degradation by the proteasome and promotes acetylation of target proteins. Deacetylated by HDAC3 and SIRT1. Deacetylation by HDAC3 promotes its ubiquitination and cytoplasmic localization. Sumoylated by UBE2I at Lys-378 and Lys-399, leading to increase of its histone acetyltransferase activity in UV-induced DNA damage response, as well as its translocation to nuclear bodies. Sumoylation with SUMO2 by PIAS4 at Lys-378 promotes repair of DNA double-strand breaks (DSBs) via homologous recombination (HR). Sumoylation by PIAS4 impairs interaction with PRKDC, inhibiting non-homologous end joining (NHEJ)-mediated repair of DSBs, thereby facilitating HR. Desumoylated by SENP3. In terms of processing, ubiquitinated by MDM2, leading to its proteasome-dependent degradation. Ubiquitination is prevented by autoacetylation at Lys-275. Ubiquitinated following deacetylation by HDAC3, leading to cytoplasmic localization. Deubiquitinated by USP7 following interaction with ATF3, promoting its stabilization.

The protein localises to the nucleus. Its subcellular location is the chromosome. The protein resides in the cytoplasm. It localises to the centromere. It is found in the kinetochore. The protein localises to the cytoskeleton. Its subcellular location is the spindle pole. The protein resides in the nucleolus. It localises to the perinuclear region. It carries out the reaction L-lysyl-[histone] + acetyl-CoA = N(6)-acetyl-L-lysyl-[histone] + CoA + H(+). The catalysed reaction is L-lysyl-[protein] + acetyl-CoA = N(6)-acetyl-L-lysyl-[protein] + CoA + H(+). The enzyme catalyses (2E)-butenoyl-CoA + L-lysyl-[protein] = N(6)-(2E)-butenoyl-L-lysyl-[protein] + CoA + H(+). It catalyses the reaction 2-hydroxyisobutanoyl-CoA + L-lysyl-[protein] = N(6)-(2-hydroxyisobutanoyl)-L-lysyl-[protein] + CoA + H(+). It carries out the reaction (S)-lactoyl-CoA + L-lysyl-[protein] = N(6)-[(S)-lactoyl]-L-lysyl-[protein] + CoA + H(+). Its activity is regulated as follows. Acyltransferase and acetyltransferase activities are activated by phosphorylation and autoacetylation. Autoacetylation activates the histone acetyltransferase activity. Its function is as follows. Catalytic subunit of the NuA4 histone acetyltransferase complex, a multiprotein complex involved in transcriptional activation of select genes principally by acetylation of nucleosomal histones H2A and H4. Histone acetylation alters nucleosome-DNA interactions and promotes interaction of the modified histones with other proteins which positively regulate transcription. The NuA4 histone acetyltransferase complex is required for the activation of transcriptional programs associated with proto-oncogene mediated growth induction, tumor suppressor mediated growth arrest and replicative senescence, apoptosis, and DNA repair. The NuA4 complex plays a direct role in repair of DNA double-strand breaks (DSBs) by promoting homologous recombination (HR): the complex inhibits TP53BP1 binding to chromatin via MBTD1, which recognizes and binds histone H4 trimethylated at 'Lys-20' (H4K20me), and KAT5 that catalyzes acetylation of 'Lys-15' of histone H2A (H2AK15ac), thereby blocking the ubiquitination mark required for TP53BP1 localization at DNA breaks. Also involved in DSB repair by mediating acetylation of 'Lys-5' of histone H2AX (H2AXK5ac), promoting NBN/NBS1 assembly at the sites of DNA damage. The NuA4 complex plays a key role in hematopoietic stem cell maintenance and is required to maintain acetylated H2A.Z/H2AZ1 at MYC target genes. The NuA4 complex is also required for spermatid development by promoting acetylation of histones: histone hyperacetylation is required for histone replacement during the transition from round to elongating spermatids. Component of a SWR1-like complex that specifically mediates the removal of histone H2A.Z/H2AZ1 from the nucleosome. Also acetylates non-histone proteins, such as BMAL1, ATM, AURKB, CHKA, CGAS, ERCC4/XPF, LPIN1, TP53/p53, NDC80/HEC1, NR1D2, RAN, SOX4, FOXP3, SQSTM1, ULK1 and RUBCNL/Pacer. Directly acetylates and activates ATM. Promotes nucleotide excision repair (NER) by mediating acetylation of ERCC4/XPF, thereby promoting formation of the ERCC4-ERCC1 complex. Relieves NR1D2-mediated inhibition of APOC3 expression by acetylating NR1D2. Acts as a regulator of regulatory T-cells (Treg) by catalyzing FOXP3 acetylation, thereby promoting FOXP3 transcriptional repressor activity. Involved in skeletal myoblast differentiation by mediating acetylation of SOX4. Catalyzes acetylation of APBB1/FE65, increasing its transcription activator activity. Promotes transcription elongation during the activation phase of the circadian cycle by catalyzing acetylation of BMAL1, promoting elongation of circadian transcripts. Together with GSK3 (GSK3A or GSK3B), acts as a regulator of autophagy: phosphorylated at Ser-86 by GSK3 under starvation conditions, leading to activate acetyltransferase activity and promote acetylation of key autophagy regulators, such as ULK1 and RUBCNL/Pacer. Acts as a regulator of the cGAS-STING innate antiviral response by catalyzing acetylation the N-terminus of CGAS, thereby promoting CGAS DNA-binding and activation. Also regulates lipid metabolism by mediating acetylation of CHKA or LPIN1. Promotes lipolysis of lipid droplets following glucose deprivation by mediating acetylation of isoform 1 of CHKA, thereby promoting monomerization of CHKA and its conversion into a tyrosine-protein kinase. Acts as a regulator of fatty-acid-induced triacylglycerol synthesis by catalyzing acetylation of LPIN1, thereby promoting the synthesis of diacylglycerol. In addition to protein acetyltransferase, can use different acyl-CoA substrates, such as (2E)-butenoyl-CoA (crotonyl-CoA), S-lactoyl-CoA (lactyl-CoA) and 2-hydroxyisobutanoyl-CoA (2-hydroxyisobutyryl-CoA), and is able to mediate protein crotonylation, lactylation and 2-hydroxyisobutyrylation, respectively. Acts as a key regulator of chromosome segregation and kinetochore-microtubule attachment during mitosis by mediating acetylation or crotonylation of target proteins. Catalyzes acetylation of AURKB at kinetochores, increasing AURKB activity and promoting accurate chromosome segregation in mitosis. Acetylates RAN during mitosis, promoting microtubule assembly at mitotic chromosomes. Acetylates NDC80/HEC1 during mitosis, promoting robust kinetochore-microtubule attachment. Catalyzes crotonylation of MAPRE1/EB1, thereby ensuring accurate spindle positioning in mitosis. Catalyzes lactylation of NBN/NBS1 in response to DNA damage, thereby promoting DNA double-strand breaks (DSBs) via homologous recombination (HR). In Pongo abelii (Sumatran orangutan), this protein is Histone acetyltransferase KAT5.